The sequence spans 473 residues: Argininosuccinate lyase (473 aa).

Belongs to the lyase 1 family. Argininosuccinate lyase subfamily.

Its subcellular location is the cytoplasm. It carries out the reaction 2-(N(omega)-L-arginino)succinate = fumarate + L-arginine. It participates in amino-acid biosynthesis; L-arginine biosynthesis; L-arginine from L-ornithine and carbamoyl phosphate: step 3/3. The sequence is that of Argininosuccinate lyase from Nocardia farcinica (strain IFM 10152).